The primary structure comprises 181 residues: Putative manganese efflux pump MntP (181 aa).

6 helical membrane-spanning segments follow: residues 5 to 25 (LIALLIMASALGMDAFSIALG), 36 to 56 (MFKVGLTIGVFHVIMPLMGMV), 66 to 86 (GLFANWLGAGLLLWLGLVMIV), 102 to 122 (IGLFVFALSVSLDSLSAGLSL), 130 to 150 (ALAVVAMGVMSTVLSWLGLFI), and 158 to 178 (VGPYSELLGGFILCGFGVKLL).

The protein belongs to the MntP (TC 9.B.29) family.

The protein resides in the cell membrane. Its function is as follows. Probably functions as a manganese efflux pump. The chain is Putative manganese efflux pump MntP from Halalkalibacterium halodurans (strain ATCC BAA-125 / DSM 18197 / FERM 7344 / JCM 9153 / C-125) (Bacillus halodurans).